The sequence spans 189 residues: UPF0301 protein HRM2_24640 (189 aa).

Belongs to the UPF0301 (AlgH) family.

The chain is UPF0301 protein HRM2_24640 from Desulforapulum autotrophicum (strain ATCC 43914 / DSM 3382 / VKM B-1955 / HRM2) (Desulfobacterium autotrophicum).